A 709-amino-acid chain; its full sequence is RxLR effector protein PITG_15110 (709 aa).

Residues 1–18 (MHAYSAAVLMGLLMVAEG) form the signal peptide. A RxLR-dEER motif is present at residues 51-66 (RLLREPETTEASNEDR).

The protein belongs to the RxLR effector family.

Its subcellular location is the secreted. It localises to the host cytoplasm. The protein resides in the host cytoskeleton. Effector that enhances P.infestans colonization of Nicotiana benthamiana leaves. The sequence is that of RxLR effector protein PITG_15110 from Phytophthora infestans (strain T30-4) (Potato late blight agent).